A 145-amino-acid polypeptide reads, in one-letter code: MFSLLKPKGAAKRRKIVGRGPGSGLGKTSGRGQKGQKARNTSPRLGFEGGQTPLYRRLPRKGFSNNDYKLEYAIVNLGDIDKKFNDGQVVNYDTLLENKLIRKKNKKIKILSNGKLTKKVSLEVSKISKTAESLVMKIGGTIKLV.

The tract at residues 1-58 is disordered; the sequence is MFSLLKPKGAAKRRKIVGRGPGSGLGKTSGRGQKGQKARNTSPRLGFEGGQTPLYRRL. A compositionally biased stretch (gly residues) spans 19-33; that stretch reads RGPGSGLGKTSGRGQ.

This sequence belongs to the universal ribosomal protein uL15 family. Part of the 50S ribosomal subunit.

In terms of biological role, binds to the 23S rRNA. This Borreliella afzelii (strain PKo) (Borrelia afzelii) protein is Large ribosomal subunit protein uL15.